The following is a 326-amino-acid chain: Protein FAM110C (326 aa).

Disordered stretches follow at residues 1-37 (MRALPTLDSLARTRPSLGDSRAAEGTLTRQPANKSAV), 51-80 (TLGSSRGPVSENRVPEAPGVQHRNPIPSTL), and 201-221 (VELRASRSKGLQRSQSDLSSR). Polar residues predominate over residues 209–221 (KGLQRSQSDLSSR). Position 255 is a phosphoserine (Ser255).

It belongs to the FAM110 family. In terms of assembly, interacts with AKT1; the interaction is transient and follows AKT1 activation. Interacts with PPP2CA and alpha-tubulin.

It localises to the cytoplasm. It is found in the cytoskeleton. The protein resides in the microtubule organizing center. Its subcellular location is the centrosome. The protein localises to the spindle pole. It localises to the nucleus. Functionally, may play a role in microtubule organization. May play a role in cell spreading and cell migration of epithelial cells; the function may involve the AKT1 signaling pathway. The sequence is that of Protein FAM110C (Fam110c) from Rattus norvegicus (Rat).